We begin with the raw amino-acid sequence, 256 residues long: Type III pantothenate kinase (256 aa).

Asp-7–Lys-14 provides a ligand contact to ATP. Substrate is bound by residues Tyr-96 and Gly-103–Arg-106. The Proton acceptor role is filled by Asp-105. Residue Thr-133 participates in ATP binding. Thr-183 serves as a coordination point for substrate.

This sequence belongs to the type III pantothenate kinase family. As to quaternary structure, homodimer. NH4(+) is required as a cofactor. It depends on K(+) as a cofactor.

Its subcellular location is the cytoplasm. It catalyses the reaction (R)-pantothenate + ATP = (R)-4'-phosphopantothenate + ADP + H(+). It functions in the pathway cofactor biosynthesis; coenzyme A biosynthesis; CoA from (R)-pantothenate: step 1/5. Its function is as follows. Catalyzes the phosphorylation of pantothenate (Pan), the first step in CoA biosynthesis. This Verminephrobacter eiseniae (strain EF01-2) protein is Type III pantothenate kinase.